The sequence spans 203 residues: Calcineurin B-like protein 5 (203 aa).

Gly-2 carries the N-myristoyl glycine lipid modification. EF-hand domains are found at residues 30 to 65 (EVEV…KNTK), 66 to 101 (KRSL…FHPN), 103 to 138 (SPRD…VLEE), and 147 to 182 (IIDS…YPLT).

Belongs to the calcineurin regulatory subunit family. Homodimer. Interacts with PP2CA, CIPK2, CIPK11, CIPK23 and CIPK24. Post-translationally, both N-myristoylation and calcium-mediated conformational changes are essential for its function. In terms of tissue distribution, expressed in green tissues, but not in the roots.

It localises to the cytoplasm. The protein resides in the nucleus. Functionally, acts as a calcium sensor. CBL proteins interact with CIPK serine-threonine protein kinases. Binding of a CBL protein to the regulatory NAF domain of a CIPK protein lead to the activation of the kinase in a calcium-dependent manner. May function as a positive regulator of salt or drought responses. The protein is Calcineurin B-like protein 5 (CBL5) of Arabidopsis thaliana (Mouse-ear cress).